A 775-amino-acid polypeptide reads, in one-letter code: 5-methyltetrahydropteroyltriglutamate--homocysteine methyltransferase (775 aa).

5-methyltetrahydropteroyltri-L-glutamate-binding positions include 16-19 and Lys115; that span reads REMK. Residues 435–437 and Glu488 contribute to the L-homocysteine site; that span reads IGS. L-methionine contacts are provided by residues 435 to 437 and Glu488; that span reads IGS. 5-methyltetrahydropteroyltri-L-glutamate is bound by residues 519–520 and Trp565; that span reads RC. Position 603 (Asp603) interacts with L-homocysteine. Asp603 lines the L-methionine pocket. Residue Glu609 coordinates 5-methyltetrahydropteroyltri-L-glutamate. Residues His645, Cys647, and Glu669 each contribute to the Zn(2+) site. The Proton donor role is filled by His698. Residue Cys730 coordinates Zn(2+).

Belongs to the vitamin-B12 independent methionine synthase family. It depends on Zn(2+) as a cofactor.

It carries out the reaction 5-methyltetrahydropteroyltri-L-glutamate + L-homocysteine = tetrahydropteroyltri-L-glutamate + L-methionine. Its pathway is amino-acid biosynthesis; L-methionine biosynthesis via de novo pathway; L-methionine from L-homocysteine (MetE route): step 1/1. Functionally, catalyzes the transfer of a methyl group from 5-methyltetrahydrofolate to homocysteine resulting in methionine formation. The chain is 5-methyltetrahydropteroyltriglutamate--homocysteine methyltransferase from Coxiella burnetii (strain RSA 331 / Henzerling II).